Here is a 59-residue protein sequence, read N- to C-terminus: UPF0434 protein GOX0764 (59 aa).

It belongs to the UPF0434 family.

This Gluconobacter oxydans (strain 621H) (Gluconobacter suboxydans) protein is UPF0434 protein GOX0764.